The sequence spans 387 residues: Galactokinase (387 aa).

33-36 (EHID) contributes to the substrate binding site. Residues serine 67 and 124–130 (GAGLSSS) contribute to the ATP site. Positions 130 and 162 each coordinate Mg(2+). The Proton acceptor role is filled by aspartate 174. Tyrosine 224 serves as a coordination point for substrate.

It belongs to the GHMP kinase family. GalK subfamily.

It localises to the cytoplasm. The catalysed reaction is alpha-D-galactose + ATP = alpha-D-galactose 1-phosphate + ADP + H(+). It participates in carbohydrate metabolism; galactose metabolism. Functionally, catalyzes the transfer of the gamma-phosphate of ATP to D-galactose to form alpha-D-galactose-1-phosphate (Gal-1-P). This is Galactokinase from Clostridium perfringens (strain 13 / Type A).